Reading from the N-terminus, the 909-residue chain is MEDDGGSDGGEGNGGFSPNSSFGAFADTAMDLDFMDELLFDGCWLETTDSKSLKQTEQSPSASTAMNDNSPFLCFGENPSQDNFSNEETERMFPQAEKFLLEEAEVGKSWWIAPSASEGPSSSVKERLLQAISGLNEAVQDKDFLVQIWVPIQQEGKSFLTTWAQPHLFNQEYSSLAEYRHVSETYNFPADEGMKDFVGLPGRVFLQKFPEWTPDVRFFRRDEYPRIKEAQKCDVRGSLALPVFERGSGTCLGVVEIVTTTQKMNYRQELEKMCKALEAVDLRSSSNLNTPSSEFLQVYSDFYCAALPEIKDFLATICRSYDFPLALSWAPCARQGKVGSRHSDENFSECVSTIDSACSVPDEQSKSFWEACSEHHLLQGEGIVGKAFEATKLFFVPEVATFSKTNYPLAHHAKISGLHAALAVPLKSKSGLVEFVLEFFFPKACLDTEAQQEMLKSLCVTLQQDFRSSNLFIKDLELEVVLPVRETMLFSENLLCGAETVESLTEIQMQESSWIAHMIKANEKGKDVSLSWEYQKEDPKELSSGRENSQLDPVPNNVPLEAEQLQQASTPGLRVDIGPSTESASTGGGNMLSSRRPGEKKRAKTEKTIGLEVLRQYFAGSLKDAAKSIGVCPTTLKRICRQHGIMRWPSRKIKKVGHSLKKLQLVMDSVQGAQGSIQLDSFYTSFPELNSPNMSSNGPSLKSNEQPSHLNAQTDNGIMAEENPRSPSSSCSKSSGSSNNNENTGNILVAEDADAVLKRAHSEAQLHNVNQEETKCLARTQSHKTFKEPLVLDNSSPLTGSSNTSLRARGAIKVKATFGEARIRFTLLPSWGFAELKQEIARRFNIDDISWFDLKYLDDDKEWVLLTCEADLVECIDIYRLTQTHTIKISLNEASQVKLSGSFGNTGLS.

Disordered stretches follow at residues lysine 51–proline 71, lysine 536–asparagine 556, alanine 568–threonine 605, and asparagine 690–glycine 745. Residues glutamine 55–serine 70 are compositionally biased toward polar residues. An RWP-RK domain is found at arginine 595 to serine 676. Polar residues predominate over residues asparagine 690–asparagine 716. Low complexity predominate over residues arginine 725–glycine 745. Residues alanine 811–alanine 894 enclose the PB1 domain.

The protein resides in the nucleus. Functionally, probable transcription factor. The chain is Protein NLP1 (NLP1) from Arabidopsis thaliana (Mouse-ear cress).